The primary structure comprises 413 residues: Intracellular hyaluronan-binding protein 4 (413 aa).

Phosphoserine occurs at positions 7 and 36. A coiled-coil region spans residues 40–64; the sequence is DILREAERRRQQQLQRKRRDEAAAA. The interval 42–206 is disordered; that stretch reads LREAERRRQQ…RGGPGNRVFD (165 aa). Over residues 62 to 82 the composition is skewed to low complexity; it reads AAAAGAGPRGGRSPAGASGHR. Residue R70 is modified to Omega-N-methylarginine. S74 is subject to Phosphoserine. The span at 87 to 97 shows a compositional bias: basic and acidic residues; the sequence is GRRESQKERKS. S108 is subject to Phosphoserine. Basic and acidic residues predominate over residues 139-182; it reads MLERAERRSYREYRPYETERQADFTAEKFPDEKPGDRFDRDRPL. A compositionally biased stretch (gly residues) spans 184–201; the sequence is GRGGPRGGMRGRGRGGPG. Residues K213 and K276 each participate in a glycyl lysine isopeptide (Lys-Gly) (interchain with G-Cter in SUMO1); alternate cross-link. Residues K213 and K276 each participate in a glycyl lysine isopeptide (Lys-Gly) (interchain with G-Cter in SUMO2); alternate cross-link. The interval 227-320 is disordered; sequence VRTEDNMGGC…IRKPESTVPS (94 aa). Residues 294–315 show a composition bias toward basic and acidic residues; that stretch reads DEWKNLQEQTRPKPEFNIRKPE. K336 is covalently cross-linked (Glycyl lysine isopeptide (Lys-Gly) (interchain with G-Cter in SUMO1); alternate). Residue K336 forms a Glycyl lysine isopeptide (Lys-Gly) (interchain with G-Cter in SUMO2); alternate linkage. T354 and T375 each carry phosphothreonine; by PKC. Residues 360 to 413 are disordered; sequence NFGNLPRPGRGARGGTRGGRGRIRRAENYGPRAEVVMQDVAPNPDDPEDFPALS. Positions 404 to 413 are enriched in acidic residues; it reads DDPEDFPALS.

Belongs to the SERBP1-HABP4 family. In terms of assembly, associates with ribosomes; promoting ribosome stabilization. Interacts with EEF2/eEF2; promoting ribosome stabilization. Interacts with FMR1. Interacts with FXR1 and FXR2. Interacts with CHD3 (via C-terminus). Interacts (via C-terminus) with RACK1. Interacts with p53/TP53. Interacts (via N-terminus) with SRSF9; this interaction is direct. Interacts with SYNCRIP; this interaction is direct. Interacts with MEF2C (via N-terminus); this interaction decreases DNA-binding activity of MEF2C in myocardial cells in response to mechanical stress. Interacts with PRMT1 (via N-terminus). Interacts with SPIN1. Post-translationally, methylated. Methylation is decreased by phorbol 12-myristate 13-acetate (PMA)-activated PKC, in vitro. In terms of processing, phosphorylated by phorbol 12-myristate 13-acetate (PMA)-activated PKC isoforms at Thr-354 and Thr-375. As to expression, highly expressed in brain, heart, and kidney, and moderately expressed in skeletal muscle. Also expressed in a variety of tumor cell lines and in activated but not resting leukocytes.

Its subcellular location is the nucleus. It localises to the cytoplasm. The protein resides in the stress granule. The protein localises to the sarcoplasm. It is found in the nuclear body. Its subcellular location is the nucleolus. It localises to the nucleus speckle. The protein resides in the cajal body. The protein localises to the gem. Its function is as follows. Ribosome-binding protein that promotes ribosome hibernation, a process during which ribosomes are stabilized in an inactive state and preserved from proteasomal degradation. Acts via its association with EEF2/eEF2 factor at the A-site of the ribosome, promoting ribosome stabilization in an inactive state compatible with storage. Plays a key role in ribosome hibernation in the mature oocyte by promoting ribosome stabilization. Ribosomes, which are produced in large quantities during oogenesis, are stored and translationally repressed in the oocyte and early embryo. Also binds RNA, regulating transcription and pre-mRNA splicing. Binds (via C-terminus) to poly(U) RNA. Seems to play a role in PML-nuclear bodies formation. Negatively regulates DNA-binding activity of the transcription factor MEF2C in myocardial cells in response to mechanical stress. In Homo sapiens (Human), this protein is Intracellular hyaluronan-binding protein 4.